The sequence spans 431 residues: Histidine--tRNA ligase (431 aa).

This sequence belongs to the class-II aminoacyl-tRNA synthetase family. As to quaternary structure, homodimer.

It is found in the cytoplasm. The catalysed reaction is tRNA(His) + L-histidine + ATP = L-histidyl-tRNA(His) + AMP + diphosphate + H(+). The polypeptide is Histidine--tRNA ligase (Neisseria meningitidis serogroup B (strain ATCC BAA-335 / MC58)).